Reading from the N-terminus, the 170-residue chain is Myosin regulatory light chain 11 (170 aa).

Position 2 is a n,N,N-trimethylalanine (alanine 2). 2 positions are modified to phosphoserine: serine 16 and serine 17. A phosphothreonine mark is found at threonine 26 and threonine 36. The EF-hand 1 domain maps to 26–61; it reads TQIQEFKEAFTVIDQNRDGIIDKEDLRDTFAAMGRL. 4 residues coordinate Ca(2+): aspartate 39, asparagine 41, aspartate 43, and aspartate 50. The residue at position 76 (serine 76) is a Phosphoserine. EF-hand domains lie at 96 to 131 and 132 to 167; these read DPED…QCDR and FSQE…GDAK. Threonine 102 is modified (phosphothreonine).

In terms of assembly, myosin is a hexamer of 2 heavy chains and 4 light chains. Post-translationally, n,N,N-trimethylalanine found in this myosin light chain would not have been detected in the N-terminal tryptic peptide in PubMed:863872 and PubMed:352892 because it would remain trimethylated and ninhydrin negative after hydrolysis.

In terms of biological role, myosin regulatory subunit that plays an essential role to maintain muscle integrity during early development. Plays a role in muscle contraction. This Oryctolagus cuniculus (Rabbit) protein is Myosin regulatory light chain 11 (MYL11).